The chain runs to 186 residues: MRDQKALSVRTVVAIGIGTAILFILKRFAVIPTGIANTNIDISYGFLGFIATLFGPIAGFFIGFLGHALNDFTQYGTPWWTWVFTTGLVGMVIGLFWRRFNVEAGNFGMKKIVSFNLLQIITNVVSWSLIAPTLDIWIYSEPANKVYVQGIVSAISNSIATGVIGTILLVTYAATRTRSGSLKKES.

5 helical membrane passes run 12–32, 45–65, 77–97, 112–132, and 150–170; these read VVAI…AVIP, GFLG…IGFL, TPWW…GLFW, IVSF…LIAP, and GIVS…ILLV.

The protein belongs to the UPF0397 family.

The protein localises to the cell membrane. This Lacticaseibacillus casei (strain BL23) (Lactobacillus casei) protein is UPF0397 protein LCABL_04350.